Consider the following 388-residue polypeptide: 3-oxo-Delta(4,5)-steroid 5-beta-reductase (388 aa).

Serine 2 carries the N-acetylserine modification. NADP(+) contacts are provided by residues 35 to 37, 63 to 64, 81 to 82, threonine 105, and glutamine 143; these read TGI, RR, and DV. Catalysis depends on residues lysine 147 and tyrosine 178. NADP(+)-binding positions include tyrosine 178, isoleucine 205, and 212-214; that span reads SLM.

Belongs to the short-chain dehydrogenases/reductases (SDR) family. Highly divergent. As to quaternary structure, homodimer. As to expression, expressed in roots, stems, leaves, flowers, seeds and siliques. Expressed in the vascular bundles.

The enzyme catalyses 5beta-cholestan-3-one + NADP(+) = cholest-4-en-3-one + NADPH + H(+). It carries out the reaction 4,5beta-dihydrocortisone + NADP(+) = cortisone + NADPH + H(+). Involved in vascular strand development. Catalyzes the stereospecific conversion of progesterone to 5-beta-pregnane-3,20-dione. Can use progesterone, testosterone, 21-acetyl cortexone, 2-cyclohexenone, but-1-en-3-one, ethyl acrylate, ethylmethacrylate, cortisone and canarigenone as substrates, lower activity with 3-methyl-2-cyclohexenone and 3,5,5-trimethyl-2-cyclohexenone as substrate, and no activity with canarigenin, canarigenin digitoxoside and pregnenolone. May be involved in the formation of 5-beta phytoecdysteroids. This is 3-oxo-Delta(4,5)-steroid 5-beta-reductase (VEP1) from Arabidopsis thaliana (Mouse-ear cress).